A 262-amino-acid chain; its full sequence is Phosphate import ATP-binding protein PstB (262 aa).

Residues 15-257 (AKASNLNLWY…PQKSKTEQYI (243 aa)) enclose the ABC transporter domain. 47 to 54 (GPSGCGKS) contributes to the ATP binding site.

The protein belongs to the ABC transporter superfamily. Phosphate importer (TC 3.A.1.7) family. The complex is composed of two ATP-binding proteins (PstB), two transmembrane proteins (PstC and PstA) and a solute-binding protein (PstS).

The protein localises to the cell inner membrane. The enzyme catalyses phosphate(out) + ATP + H2O = ADP + 2 phosphate(in) + H(+). Functionally, part of the ABC transporter complex PstSACB involved in phosphate import. Responsible for energy coupling to the transport system. The protein is Phosphate import ATP-binding protein PstB of Wolinella succinogenes (strain ATCC 29543 / DSM 1740 / CCUG 13145 / JCM 31913 / LMG 7466 / NCTC 11488 / FDC 602W) (Vibrio succinogenes).